Consider the following 836-residue polypeptide: DNA gyrase subunit A (836 aa).

Residues 34 to 500 form the Topo IIA-type catalytic domain; sequence LPDARDGLKP…AGDVRDIEDI (467 aa). The O-(5'-phospho-DNA)-tyrosine intermediate role is filled by Tyr122. A GyrA-box motif is present at residues 527-533; the sequence is QKRGGQG.

This sequence belongs to the type II topoisomerase GyrA/ParC subunit family. As to quaternary structure, heterotetramer, composed of two GyrA and two GyrB chains. In the heterotetramer, GyrA contains the active site tyrosine that forms a transient covalent intermediate with DNA, while GyrB binds cofactors and catalyzes ATP hydrolysis.

The protein resides in the cytoplasm. The enzyme catalyses ATP-dependent breakage, passage and rejoining of double-stranded DNA.. In terms of biological role, a type II topoisomerase that negatively supercoils closed circular double-stranded (ds) DNA in an ATP-dependent manner to modulate DNA topology and maintain chromosomes in an underwound state. Negative supercoiling favors strand separation, and DNA replication, transcription, recombination and repair, all of which involve strand separation. Also able to catalyze the interconversion of other topological isomers of dsDNA rings, including catenanes and knotted rings. Type II topoisomerases break and join 2 DNA strands simultaneously in an ATP-dependent manner. In Chlamydia trachomatis serovar D (strain ATCC VR-885 / DSM 19411 / UW-3/Cx), this protein is DNA gyrase subunit A.